Consider the following 206-residue polypeptide: Ribosomal RNA large subunit methyltransferase E (206 aa).

S-adenosyl-L-methionine-binding residues include glycine 60, tryptophan 62, aspartate 80, asparagine 96, and aspartate 121. Residue lysine 161 is the Proton acceptor of the active site.

Belongs to the class I-like SAM-binding methyltransferase superfamily. RNA methyltransferase RlmE family.

It is found in the cytoplasm. It carries out the reaction uridine(2552) in 23S rRNA + S-adenosyl-L-methionine = 2'-O-methyluridine(2552) in 23S rRNA + S-adenosyl-L-homocysteine + H(+). Specifically methylates the uridine in position 2552 of 23S rRNA at the 2'-O position of the ribose in the fully assembled 50S ribosomal subunit. In Francisella philomiragia subsp. philomiragia (strain ATCC 25017 / CCUG 19701 / FSC 153 / O#319-036), this protein is Ribosomal RNA large subunit methyltransferase E.